Reading from the N-terminus, the 29-residue chain is Cysteine-rich venom protein 25-A (29 aa).

Belongs to the CRISP family. Contains 8 disulfide bonds. As to expression, expressed by the venom gland.

The protein resides in the secreted. This Naja haje haje (Egyptian cobra) protein is Cysteine-rich venom protein 25-A.